We begin with the raw amino-acid sequence, 214 residues long: Dual specificity phosphatase 29 (214 aa).

Residues 46-194 enclose the Tyrosine-protein phosphatase domain; sequence HVNEVWPNLY…LRELDIELAL (149 aa). 138–145 lines the substrate pocket; it reads HCAMGRSR. C139 functions as the Phosphocysteine intermediate in the catalytic mechanism.

This sequence belongs to the protein-tyrosine phosphatase family. Non-receptor class dual specificity subfamily.

It is found in the cytoplasm. It localises to the nucleus. The catalysed reaction is O-phospho-L-tyrosyl-[protein] + H2O = L-tyrosyl-[protein] + phosphate. The enzyme catalyses O-phospho-L-seryl-[protein] + H2O = L-seryl-[protein] + phosphate. It catalyses the reaction O-phospho-L-threonyl-[protein] + H2O = L-threonyl-[protein] + phosphate. Its function is as follows. Dual specificity phosphatase able to dephosphorylate phosphotyrosine, phosphoserine and phosphothreonine residues within the same substrate, with a preference for phosphotyrosine as a substrate. Involved in the modulation of AMPK and MAPK1/2 signaling pathways. The sequence is that of Dual specificity phosphatase 29 (DUSP29) from Gallus gallus (Chicken).